The primary structure comprises 421 residues: 3-phosphoshikimate 1-carboxyvinyltransferase (421 aa).

3-phosphoshikimate contacts are provided by Lys21, Ser22, and Arg26. Lys21 contributes to the phosphoenolpyruvate binding site. Phosphoenolpyruvate contacts are provided by Gly93 and Arg121. Residues Ser166, Ser167, Gln168, Ser194, Asp310, and Lys337 each contribute to the 3-phosphoshikimate site. Gln168 provides a ligand contact to phosphoenolpyruvate. Residue Asp310 is the Proton acceptor of the active site. Phosphoenolpyruvate is bound by residues Arg341, Arg382, and Lys407.

Belongs to the EPSP synthase family. In terms of assembly, monomer.

The protein localises to the cytoplasm. The enzyme catalyses 3-phosphoshikimate + phosphoenolpyruvate = 5-O-(1-carboxyvinyl)-3-phosphoshikimate + phosphate. It functions in the pathway metabolic intermediate biosynthesis; chorismate biosynthesis. Catalyzes the transfer of the enolpyruvyl moiety of phosphoenolpyruvate (PEP) to the 5-hydroxyl of shikimate-3-phosphate (S3P) to produce enolpyruvyl shikimate-3-phosphate and inorganic phosphate. The sequence is that of 3-phosphoshikimate 1-carboxyvinyltransferase from Methanoregula boonei (strain DSM 21154 / JCM 14090 / 6A8).